A 425-amino-acid chain; its full sequence is Cell adhesion molecule CEACAM16 (425 aa).

The N-terminal stretch at 1–20 is a signal peptide; that stretch reads MALTGYSWLLLSATFLNVGA. The N-linked (GlcNAc...) asparagine glycan is linked to Asn36. 2 Ig-like C2-type domains span residues 133 to 218 and 223 to 309; these read PTVL…INLT and PERV…ASVV. Cys153 and Cys201 are disulfide-bonded. Residue Asn216 is glycosylated (N-linked (GlcNAc...) asparagine). Residues Cys252 and Cys293 are joined by a disulfide bond. N-linked (GlcNAc...) asparagine glycosylation is present at Asn394.

The protein belongs to the immunoglobulin superfamily. CEA family. In terms of assembly, homooligomer; can for homodimers and homotetramers. Interacts with TECTA and TECTB.

The protein localises to the secreted. Functionally, required for proper hearing, plays a role in maintaining the integrity of the tectorial membrane. In Homo sapiens (Human), this protein is Cell adhesion molecule CEACAM16.